The following is a 279-amino-acid chain: Large ribosomal subunit protein uL2 (279 aa).

Disordered stretches follow at residues 34–55 and 221–279; these read LAPLKKSGGRNRAGRITSRHKG and RGMA…RKAK. Residues 40 to 55 show a composition bias toward basic residues; the sequence is SGGRNRAGRITSRHKG. Positions 232 to 242 are enriched in gly residues; that stretch reads MGGGEGRSKSG. Basic residues predominate over residues 259 to 279; sequence LKTRNKKKASSKLIVRGRKAK.

This sequence belongs to the universal ribosomal protein uL2 family. In terms of assembly, part of the 50S ribosomal subunit. Forms a bridge to the 30S subunit in the 70S ribosome.

In terms of biological role, one of the primary rRNA binding proteins. Required for association of the 30S and 50S subunits to form the 70S ribosome, for tRNA binding and peptide bond formation. It has been suggested to have peptidyltransferase activity; this is somewhat controversial. Makes several contacts with the 16S rRNA in the 70S ribosome. This Chlorobium phaeobacteroides (strain BS1) protein is Large ribosomal subunit protein uL2.